The primary structure comprises 145 residues: Ribosome-binding factor A (145 aa).

The segment covering 1-10 (MKRPSSHGRR) has biased composition (basic residues). 2 disordered regions span residues 1 to 21 (MKRP…RQLR) and 124 to 145 (DDPK…KDED).

It belongs to the RbfA family. As to quaternary structure, monomer. Binds 30S ribosomal subunits, but not 50S ribosomal subunits or 70S ribosomes.

The protein resides in the cytoplasm. In terms of biological role, one of several proteins that assist in the late maturation steps of the functional core of the 30S ribosomal subunit. Associates with free 30S ribosomal subunits (but not with 30S subunits that are part of 70S ribosomes or polysomes). Required for efficient processing of 16S rRNA. May interact with the 5'-terminal helix region of 16S rRNA. This chain is Ribosome-binding factor A, found in Phenylobacterium zucineum (strain HLK1).